A 157-amino-acid chain; its full sequence is MGIISFIFALAEDMLLAAIPAVGFAMVFNVPQRALRWCALLGAIGHGSRMIMMSAGFNIEWATFLAALLVGSIGIQWSRWYLAHPKIFTVAAVIPMFPGISAYTAMISAVKISHFGYSEEMMILLLSNFLKASSIVGALSIGLSIPGLWLYRKRPRV.

A run of 4 helical transmembrane segments spans residues 2 to 22, 55 to 75, 87 to 107, and 129 to 149; these read GIIS…IPAV, AGFN…SIGI, IFTV…TAMI, and FLKA…PGLW.

It belongs to the ThrE exporter (TC 2.A.79) family. In terms of assembly, the transporter is composed of YjjB and YjjP.

Its subcellular location is the cell inner membrane. In terms of biological role, involved in succinate export with YjjP. Both proteins are required for export. The polypeptide is Probable succinate transporter subunit YjjB (Klebsiella pneumoniae subsp. pneumoniae (strain ATCC 700721 / MGH 78578)).